Here is a 768-residue protein sequence, read N- to C-terminus: Valine--tRNA ligase (768 aa).

A 'HIGH' region motif is present at residues 37–47 (PTVSGKMHMGH). The 'KMSKS' region motif lies at 510 to 514 (KMSKS). Lys513 contributes to the ATP binding site.

It belongs to the class-I aminoacyl-tRNA synthetase family. ValS type 2 subfamily.

Its subcellular location is the cytoplasm. The catalysed reaction is tRNA(Val) + L-valine + ATP = L-valyl-tRNA(Val) + AMP + diphosphate. In terms of biological role, catalyzes the attachment of valine to tRNA(Val). As ValRS can inadvertently accommodate and process structurally similar amino acids such as threonine, to avoid such errors, it has a 'posttransfer' editing activity that hydrolyzes mischarged Thr-tRNA(Val) in a tRNA-dependent manner. The sequence is that of Valine--tRNA ligase from Picrophilus torridus (strain ATCC 700027 / DSM 9790 / JCM 10055 / NBRC 100828 / KAW 2/3).